The sequence spans 83 residues: Large ribosomal subunit protein bL27 (83 aa).

This sequence belongs to the bacterial ribosomal protein bL27 family.

In Thermotoga maritima (strain ATCC 43589 / DSM 3109 / JCM 10099 / NBRC 100826 / MSB8), this protein is Large ribosomal subunit protein bL27 (rpmA).